We begin with the raw amino-acid sequence, 46 residues long: MESILMIFAKLPEAYAPFDPIVDVLPVIPVLFLLLAFVWQAAVSFR.

Residues 1–9 (MESILMIFA) constitute a propeptide that is removed on maturation. Residues 25–45 (LPVIPVLFLLLAFVWQAAVSF) traverse the membrane as a helical segment.

This sequence belongs to the PsbK family. PSII is composed of 1 copy each of membrane proteins PsbA, PsbB, PsbC, PsbD, PsbE, PsbF, PsbH, PsbI, PsbJ, PsbK, PsbL, PsbM, PsbT, PsbX, PsbY, PsbZ, Psb30/Ycf12, at least 3 peripheral proteins of the oxygen-evolving complex and a large number of cofactors. It forms dimeric complexes.

It localises to the plastid. It is found in the chloroplast thylakoid membrane. One of the components of the core complex of photosystem II (PSII). PSII is a light-driven water:plastoquinone oxidoreductase that uses light energy to abstract electrons from H(2)O, generating O(2) and a proton gradient subsequently used for ATP formation. It consists of a core antenna complex that captures photons, and an electron transfer chain that converts photonic excitation into a charge separation. This Stigeoclonium helveticum (Green alga) protein is Photosystem II reaction center protein K.